The following is a 612-amino-acid chain: MTDKEKRLERQSRIRNFSIIAHIDHGKSTLADRILEKTAAITQREMKEQLLDSMDLERERGITIKLNSVQLKYKAKDGEEYIMHLIDTPGHVDFTYEVSRSLAACEGAILVVDAAQGIEAQTLANVYLALDNNLEILPIINKIDLPSAEPERVRGEIEDVIGLDASEAVLTSAKAGIGIEDILEQIVEKVPAPAGDPEAPLQALIFDSLYDAYRGVIAYIRIVEGTVKPGQKIKMMATGKEFEVLEVGVFTPKAMPTDELTVGDVGYLTAAIKNVGDTRVGDTITSAVNPAQEALPGYRKLNPMVYCGLYPIDTAKYNDLREALEKLELNDSSLQYEAETSQALGFGFRCGFLGMLHMEIIQERIEREFKIDLITTAPSVIYDVYMTDGEKIVVDNPSNLPDPQKIERIEEPYVKATMMVPNDYVGSVMELCQGKRGHFIDMQYLDANRVSIVYEIPLAEIVYEFFDQLKSNTKGYASFDYELIGYRPSTLVKMDIMLNGEKIDALSFIVHRDYAYERGKIIVDKLKELIPRQHFEVPIQAAIGQKIVARSTIKAMRKNVLAKCYGGDISRKRKLLEKQKEGKKRMKQVGSVEVPQEAFMAVLKMDDSTPKK.

In terms of domain architecture, tr-type G spans 12 to 194 (SRIRNFSIIA…QIVEKVPAPA (183 aa)). Residues 24–29 (DHGKST) and 141–144 (NKID) contribute to the GTP site.

The protein belongs to the TRAFAC class translation factor GTPase superfamily. Classic translation factor GTPase family. LepA subfamily.

It localises to the cell membrane. The enzyme catalyses GTP + H2O = GDP + phosphate + H(+). In terms of biological role, required for accurate and efficient protein synthesis under certain stress conditions. May act as a fidelity factor of the translation reaction, by catalyzing a one-codon backward translocation of tRNAs on improperly translocated ribosomes. Back-translocation proceeds from a post-translocation (POST) complex to a pre-translocation (PRE) complex, thus giving elongation factor G a second chance to translocate the tRNAs correctly. Binds to ribosomes in a GTP-dependent manner. This chain is Elongation factor 4, found in Bacillus pumilus (strain SAFR-032).